The primary structure comprises 339 residues: DNA-directed RNA polymerase subunit alpha (339 aa).

The segment at 1–233 (MVREEVAGST…DLFLPFLHAE (233 aa)) is alpha N-terminal domain (alpha-NTD). An alpha C-terminal domain (alpha-CTD) region spans residues 264 to 339 (KKGIPLNCIF…IDLLKNKLSF (76 aa)).

It belongs to the RNA polymerase alpha chain family. In plastids the minimal PEP RNA polymerase catalytic core is composed of four subunits: alpha, beta, beta', and beta''. When a (nuclear-encoded) sigma factor is associated with the core the holoenzyme is formed, which can initiate transcription.

It is found in the plastid. It localises to the chloroplast. It catalyses the reaction RNA(n) + a ribonucleoside 5'-triphosphate = RNA(n+1) + diphosphate. Functionally, DNA-dependent RNA polymerase catalyzes the transcription of DNA into RNA using the four ribonucleoside triphosphates as substrates. This chain is DNA-directed RNA polymerase subunit alpha, found in Bromus inermis (Smooth brome grass).